Consider the following 348-residue polypeptide: MSLLVVSMACVGFFLLQGAWPHEGVHRKPSLLAHPGRLVKSEETVILQCWSDVMFEHFLLHREGMFNDTLRLIGEHHDGVSKANFSISRMTQDLAGTYRCYGSVTHSPYQVSAPSDPLDIVIIGLYEKPSLSAQLGPTVLAGENVTLSCSSRSSYDMYHLSREGEAHERRLPAGPKVNGTFQADFPLGPATHGGTYRCFGSFHDSPYEWSKSSDPLLVSVTGNPSNSWPSPTEPSSKTGNPRHLHILIGTSVVIILFILLFFLLHRWCSNKKNAAVMDQESAGNRTANSEDSDEQDPQEVTYTQLNHCVFTQRKITRPSQRPKTPPTDIIVYTELPNAESRSKVVSCP.

Residues 1 to 21 form the signal peptide; the sequence is MSLLVVSMACVGFFLLQGAWP. At 22–245 the chain is on the extracellular side; the sequence is HEGVHRKPSL…SKTGNPRHLH (224 aa). 2 consecutive Ig-like C2-type domains span residues 42–107 and 142–205; these read EETV…VTHS and GENV…FHDS. An intrachain disulfide couples C49 to C100. N-linked (GlcNAc...) asparagine glycans are attached at residues N67, N84, N144, and N178. C149 and C198 form a disulfide bridge. Residues 220–239 form a disordered region; that stretch reads VTGNPSNSWPSPTEPSSKTG. The helical transmembrane segment at 246 to 264 threads the bilayer; sequence ILIGTSVVIILFILLFFLL. Residues 265 to 348 lie on the Cytoplasmic side of the membrane; sequence HRWCSNKKNA…ESRSKVVSCP (84 aa).

Belongs to the immunoglobulin superfamily. As to quaternary structure, interacts with ARRB2. Interacts with PTPN6; the interaction is enhanced by ARRB2. Interacts with PTPN11; the interaction is enhanced by ARRB2. In terms of tissue distribution, expressed by NK cells.

Its subcellular location is the cell membrane. Functionally, receptor on natural killer (NK) cells for some HLA-C alleles such as w4 and w6. Inhibits the activity of NK cells thus preventing cell lysis. The chain is Killer cell immunoglobulin-like receptor 2DL1 from Homo sapiens (Human).